Here is a 411-residue protein sequence, read N- to C-terminus: Probable phosphatase HAD1 (411 aa).

Positions Leu-14–Pro-23 are enriched in polar residues. The segment at Leu-14–Phe-33 is disordered. Asp-61 acts as the Nucleophile in catalysis. Asp-61, Asp-63, and Asp-338 together coordinate Mg(2+). Catalysis depends on Asp-63, which acts as the Proton donor. Residues Pro-296 to Asp-386 are disordered. Residues Val-326–Val-345 are compositionally biased toward polar residues. The segment covering Ser-362–Arg-373 has biased composition (basic and acidic residues).

It belongs to the HAD-like hydrolase superfamily. Phosphorylated.

Probable phosphatase. Required for cell wall integrity and virulence. The sequence is that of Probable phosphatase HAD1 from Cryptococcus neoformans var. grubii serotype A (strain H99 / ATCC 208821 / CBS 10515 / FGSC 9487) (Filobasidiella neoformans var. grubii).